The sequence spans 61 residues: Metallothionein-1L (61 aa).

The tract at residues 1–29 (MDPNCSCATGGSCSCASSCKCKECKCTSC) is beta. A divalent metal cation-binding residues include Cys5, Cys7, Cys13, Cys15, Cys19, Cys21, Cys24, Cys26, Cys29, Cys33, Cys34, Cys36, Cys37, Cys41, Cys44, Cys48, Cys50, Cys57, Cys59, and Cys60. The interval 30–61 (KKSCCSCCPMGCAKCAQGCVCKGASEKCSCCA) is alpha.

The protein belongs to the metallothionein superfamily. Type 1 family. Monomer. As to expression, expressed in reticulocytes.

In terms of biological role, metallothioneins have a high content of cysteine residues that bind various heavy metals; these proteins are transcriptionally regulated by both heavy metals and glucocorticoids. The protein is Metallothionein-1L (MT1L) of Homo sapiens (Human).